Reading from the N-terminus, the 635-residue chain is Endo-1,4-beta-xylanase B (635 aa).

The region spanning 1–337 (MNLKTAYEPY…KEAYYAVLKA (337 aa)) is the GH10 domain. The Proton donor role is filled by Glu150. Catalysis depends on Glu255, which acts as the Nucleophile.

Belongs to the glycosyl hydrolase 10 (cellulase F) family.

The catalysed reaction is Endohydrolysis of (1-&gt;4)-beta-D-xylosidic linkages in xylans.. Its pathway is glycan degradation; xylan degradation. B.fibrisolvens is located in the rumen of ruminant animals, where it contributes to the animal's digestion of plant material by hydrolyzing hemicellulose with its xylanases. In Butyrivibrio fibrisolvens, this protein is Endo-1,4-beta-xylanase B (xynB).